Consider the following 420-residue polypeptide: O-methyltransferase opaF (420 aa).

S-adenosyl-L-methionine contacts are provided by residues 262-263, D287, and 308-309; these read GG and DL. The Proton acceptor role is filled by H328.

The protein belongs to the class I-like SAM-binding methyltransferase superfamily. Cation-independent O-methyltransferase family.

It functions in the pathway secondary metabolite biosynthesis. Functionally, O-methyltransferase; part of the gene cluster that mediates the biosynthesis of oxepinamides, derivatives of anthranilyl-containing tripeptides that share an oxepin ring and a fused pyrimidinone moiety. The nonribosomal peptide synthetase (NRPS) opaA assembles the quinazolinone core with D-Phe incorporation. The first adenylation domain (A1) of opaA loads and activates anthranilic acid whereas the second A domain (A2) is for activating of L-Phe, which is then converted to D-form by the E domain. The third A domain (A3) is responsible for L-Ile activation and the terminal condensation domain C3 for cyclization and releasing the NRPS product protuboxepin K. The cytochrome P450 monooxygenase opaB then catalyzes alone the oxepin ring formation to convert protuboxepin K into protuboxepin A. The flavoenzyme opaC installs subsequently one hydroxyl group at the oxepin ring, accompanied by double bond migration, to form 15-epi-oxepinamide E. The epimerase opaE changes the D-Phe residue back to L-form, leading to oxepinamide E, which is further methylated at the hydroxyl group at C-12 by the O-methyltransferase OpaF to yield oxepinamide F. The sequence is that of O-methyltransferase opaF from Aspergillus ustus.